A 485-amino-acid chain; its full sequence is ETS translocation variant 4 (485 aa).

Lys-6 participates in a covalent cross-link: Glycyl lysine isopeptide (Lys-Gly) (interchain with G-Cter in SUMO2). 2 disordered regions span residues 79 to 114 (PDFHSENSFHSPTTRIKKEPQSPRTDPALSCSRKPP) and 135 to 214 (IAIK…QHQL). Residue Lys-95 forms a Glycyl lysine isopeptide (Lys-Gly) (interchain with G-Cter in SUMO) linkage. Ser-100 bears the Phosphoserine mark. Residue Lys-138 forms a Glycyl lysine isopeptide (Lys-Gly) (interchain with G-Cter in SUMO2) linkage. Phosphoserine occurs at positions 139 and 148. Low complexity predominate over residues 158–171 (QQQSLLRASSSSQS). Ser-215 is modified (phosphoserine). Residues Lys-227 and Lys-261 each participate in a glycyl lysine isopeptide (Lys-Gly) (interchain with G-Cter in SUMO) cross-link. Lys-323 is covalently cross-linked (Glycyl lysine isopeptide (Lys-Gly) (interchain with G-Cter in SUMO2)). Residues 342–422 (LQLWQFLVAL…AGERYVYKFV (81 aa)) constitute a DNA-binding region (ETS).

It belongs to the ETS family. Post-translationally, sumoylated; enhanced upon ERK/MAP kinase pathway activation it positively regulates the transcriptional activator capacity. Sumoylation at Lys-95 probably requires phosphorylation at Ser-100. Transiently polysumoylated and desumoylated by SENP1. Sumoylation is a prerequisite to polyubiquitination which in turn increases proteasomal-mediated degradation. Probably polyubiquitinated by RNF4 and deubiquitinated by USP2. In terms of tissue distribution, epididymis and brain.

The protein localises to the nucleus. Its function is as follows. Transcriptional activator. May play a role in keratinocyte differentiation. The protein is ETS translocation variant 4 (Etv4) of Mus musculus (Mouse).